Consider the following 364-residue polypeptide: Transcription factor TGA4 (364 aa).

Positions 39-79 (PGSIIIPTNEKPDSLSEDTSHGTEGTPHKFDQEASTSRHPD) are disordered. Residues 48 to 79 (EKPDSLSEDTSHGTEGTPHKFDQEASTSRHPD) show a composition bias toward basic and acidic residues. In terms of domain architecture, bZIP spans 78–141 (PDKIQRRLAQ…NGVDTNALSF (64 aa)). Coiled coils occupy residues 79 to 127 (DKIQ…RQQG) and 257 to 277 (NLRQSCQQAEDALSQGMEKLQ). Residues 80-100 (KIQRRLAQNREAARKSRLRKK) are basic motif. The leucine-zipper stretch occupies residues 106 to 120 (LETSRLKLIHLEQEL). One can recognise a DOG1 domain in the interval 149 to 359 (IVAFEMEYGH…RALSSSWAAR (211 aa)). An intrachain disulfide couples C256 to C262.

This sequence belongs to the bZIP family. Binds DNA as a dimer. Interaction with the Dof domain proteins OBP1, OBP2 or OBP3 enhances the binding to the ocs element. Interacts with RAP2-3/EPB, an ethylene-responsive element binding protein. The reduced form interacts with NPR1. In terms of tissue distribution, predominantly expressed in roots.

It is found in the nucleus. Its function is as follows. Transcriptional activator that binds specifically to the DNA sequence 5'-TGACG-3'. Recognizes ocs elements like the as-1 motif of the cauliflower mosaic virus 35S promoter. Binding to the as-1-like cis elements mediate auxin- and salicylic acid-inducible transcription. May be involved in the induction of the systemic acquired resistance (SAR) via its interaction with NPR1. Could also bind to the Hex-motif (5'-TGACGTGG-3') another cis-acting element found in plant histone promoters. The chain is Transcription factor TGA4 (TGA4) from Arabidopsis thaliana (Mouse-ear cress).